The sequence spans 252 residues: MIQIKSLSVGARLLPLSFELKQGQVTHVIGPNGSGKSTLLEAISGVGDGYKGDIKLDGQDLSELSLQDLSLHRAYLCQSARPAFNLEVFQYLALSLPSSSHGLDIEINAALDEISQMLDISDKLHRSIQTLSGGEWQRVRLAGMCLQIWPTLNPYAKLLILDEPAAPLDIAQEALLYKLIERVAEKGIAVIMANHDLNRTLRHADQVLLLEKGVLQTSGSAEQVLVPEQLESVFNTQVKSISVDNQTYLLFG.

The region spanning 2 to 237 is the ABC transporter domain; sequence IQIKSLSVGA…EQLESVFNTQ (236 aa). 30 to 37 provides a ligand contact to ATP; the sequence is GPNGSGKS.

The protein belongs to the ABC transporter superfamily. Vitamin B12 importer (TC 3.A.1.13.1) family. In terms of assembly, the complex is composed of two ATP-binding proteins (BtuD), two transmembrane proteins (BtuC) and a solute-binding protein (BtuF).

The protein localises to the cell inner membrane. The catalysed reaction is an R-cob(III)alamin(out) + ATP + H2O = an R-cob(III)alamin(in) + ADP + phosphate + H(+). Its function is as follows. Part of the ABC transporter complex BtuCDF involved in vitamin B12 import. Responsible for energy coupling to the transport system. This chain is Vitamin B12 import ATP-binding protein BtuD, found in Vibrio atlanticus (strain LGP32) (Vibrio splendidus (strain Mel32)).